The sequence spans 493 residues: 3-octaprenyl-4-hydroxybenzoate carboxy-lyase (493 aa).

N172 lines the Mn(2+) pocket. Residues 175–177 (IYR), 189–191 (RWL), and 194–195 (RG) contribute to the prenylated FMN site. Position 238 (E238) interacts with Mn(2+). Catalysis depends on D287, which acts as the Proton donor.

Belongs to the UbiD family. Homohexamer. It depends on prenylated FMN as a cofactor. Requires Mn(2+) as cofactor.

The protein resides in the cell membrane. The enzyme catalyses a 4-hydroxy-3-(all-trans-polyprenyl)benzoate + H(+) = a 2-(all-trans-polyprenyl)phenol + CO2. Its pathway is cofactor biosynthesis; ubiquinone biosynthesis. In terms of biological role, catalyzes the decarboxylation of 3-octaprenyl-4-hydroxy benzoate to 2-octaprenylphenol, an intermediate step in ubiquinone biosynthesis. The sequence is that of 3-octaprenyl-4-hydroxybenzoate carboxy-lyase from Shewanella denitrificans (strain OS217 / ATCC BAA-1090 / DSM 15013).